We begin with the raw amino-acid sequence, 429 residues long: Argininosuccinate lyase (429 aa).

It belongs to the lyase 1 family. Argininosuccinate lyase subfamily.

The protein localises to the cytoplasm. The catalysed reaction is 2-(N(omega)-L-arginino)succinate = fumarate + L-arginine. The protein operates within amino-acid biosynthesis; L-arginine biosynthesis; L-arginine from L-ornithine and carbamoyl phosphate: step 3/3. This is Argininosuccinate lyase from Pyrobaculum neutrophilum (strain DSM 2338 / JCM 9278 / NBRC 100436 / V24Sta) (Thermoproteus neutrophilus).